The primary structure comprises 318 residues: Aspartate carbamoyltransferase catalytic subunit (318 aa).

Residues R58 and T59 each coordinate carbamoyl phosphate. K86 provides a ligand contact to L-aspartate. 3 residues coordinate carbamoyl phosphate: R108, H141, and Q144. 2 residues coordinate L-aspartate: R174 and R226. The carbamoyl phosphate site is built by G270 and P271.

The protein belongs to the aspartate/ornithine carbamoyltransferase superfamily. ATCase family. In terms of assembly, heterododecamer (2C3:3R2) of six catalytic PyrB chains organized as two trimers (C3), and six regulatory PyrI chains organized as three dimers (R2).

The catalysed reaction is carbamoyl phosphate + L-aspartate = N-carbamoyl-L-aspartate + phosphate + H(+). It functions in the pathway pyrimidine metabolism; UMP biosynthesis via de novo pathway; (S)-dihydroorotate from bicarbonate: step 2/3. Its function is as follows. Catalyzes the condensation of carbamoyl phosphate and aspartate to form carbamoyl aspartate and inorganic phosphate, the committed step in the de novo pyrimidine nucleotide biosynthesis pathway. The polypeptide is Aspartate carbamoyltransferase catalytic subunit (Lactobacillus helveticus (strain DPC 4571)).